Here is a 745-residue protein sequence, read N- to C-terminus: Cytoskeleton-associated protein 2-like (745 aa).

4 disordered regions span residues 26–305 (KGKL…VNRV), 319–362 (PATE…LGPQ), 422–483 (FPPQ…TYKR), and 608–638 (EAVT…PCPS). Composition is skewed to polar residues over residues 67–89 (SKTT…ASQK) and 101–136 (GLTS…SRNP). The KEN box motif lies at 183 to 185 (KEN). A compositionally biased stretch (basic and acidic residues) spans 192–202 (KPEKPDPELHS). A Glycyl lysine isopeptide (Lys-Gly) (interchain with G-Cter in SUMO1); alternate cross-link involves residue Lys-195. Lys-195 participates in a covalent cross-link: Glycyl lysine isopeptide (Lys-Gly) (interchain with G-Cter in SUMO2); alternate. Polar residues-rich tracts occupy residues 205–216 (KPNTGSSNQTQK), 224–233 (LSKSSVTQTA), 242–253 (FIRNTQIRTQAV), and 284–301 (NKTQ…QDIT). Positions 427-442 (HFLNKTAPRTQASTAA) are enriched in polar residues. Basic and acidic residues predominate over residues 459–475 (KKPEGEDRRKQLEEWQK). A compositionally biased stretch (polar residues) spans 608 to 624 (EAVTSDTSAAGTNTTSA). Ser-745 carries the post-translational modification Phosphoserine.

It belongs to the CKAP2 family. Post-translationally, ubiquitinated by the anaphase promoting complex/cyclosome (APC/C). Highly expressed in regions of active neurogenesis and neural stem/progenitor cells (NSPCs), both embryonic and adult, not detected in lung, liver, kidney, heart, and skeletal muscle.

It localises to the cytoplasm. Its subcellular location is the cytoskeleton. It is found in the spindle pole. In terms of biological role, microtubule-associated protein required for mitotic spindle formation and cell-cycle progression in neural progenitor cells. The chain is Cytoskeleton-associated protein 2-like (Ckap2l) from Mus musculus (Mouse).